A 141-amino-acid chain; its full sequence is 3-hydroxyacyl-[acyl-carrier-protein] dehydratase FabZ (141 aa).

Histidine 48 is an active-site residue.

This sequence belongs to the thioester dehydratase family. FabZ subfamily.

It is found in the cytoplasm. The enzyme catalyses a (3R)-hydroxyacyl-[ACP] = a (2E)-enoyl-[ACP] + H2O. Functionally, involved in unsaturated fatty acids biosynthesis. Catalyzes the dehydration of short chain beta-hydroxyacyl-ACPs and long chain saturated and unsaturated beta-hydroxyacyl-ACPs. This chain is 3-hydroxyacyl-[acyl-carrier-protein] dehydratase FabZ, found in Bacillus velezensis (strain DSM 23117 / BGSC 10A6 / LMG 26770 / FZB42) (Bacillus amyloliquefaciens subsp. plantarum).